The following is a 370-amino-acid chain: Uroporphyrinogen decarboxylase (370 aa).

Residues 29-33, aspartate 79, tyrosine 155, serine 210, and histidine 342 each bind substrate; that span reads RQAGR.

The protein belongs to the uroporphyrinogen decarboxylase family. In terms of assembly, homodimer.

The protein localises to the cytoplasm. The enzyme catalyses uroporphyrinogen III + 4 H(+) = coproporphyrinogen III + 4 CO2. It functions in the pathway porphyrin-containing compound metabolism; protoporphyrin-IX biosynthesis; coproporphyrinogen-III from 5-aminolevulinate: step 4/4. Catalyzes the decarboxylation of four acetate groups of uroporphyrinogen-III to yield coproporphyrinogen-III. The sequence is that of Uroporphyrinogen decarboxylase from Verminephrobacter eiseniae (strain EF01-2).